The primary structure comprises 315 residues: Ribosomal RNA small subunit methyltransferase H (315 aa).

S-adenosyl-L-methionine-binding positions include 32-34, Asp-52, Phe-78, Asp-100, and Gln-107; that span reads GGH.

It belongs to the methyltransferase superfamily. RsmH family.

The protein resides in the cytoplasm. The catalysed reaction is cytidine(1402) in 16S rRNA + S-adenosyl-L-methionine = N(4)-methylcytidine(1402) in 16S rRNA + S-adenosyl-L-homocysteine + H(+). Specifically methylates the N4 position of cytidine in position 1402 (C1402) of 16S rRNA. This is Ribosomal RNA small subunit methyltransferase H from Psychromonas ingrahamii (strain DSM 17664 / CCUG 51855 / 37).